The following is a 334-amino-acid chain: MTHKISVLHQDKKFDFSLRPKKLTEFCGQKQLKERLDLFLRAAVQRNEVPGHCLFYGPPGLGKTSLAHIMANTIGKGLVIASGPQLLKPSDLIGLLTGLQEGDIFFIDEIHRMGKAAEEYLYPAMEDFKVDITLDSGPGARSVRLDLAPFTLVGATTRAGMLSEPLRTRFAFTGRVDYYTDEDLVSILSRSSQLLSIEANQETLLEIARRARGTPRLANNLLRWVRDFAQMREGNCINSAVAEKALAMLLIDNLGLNEIDIKLLSVMIDFYQGGPVGMKTLAMAVGEDVRTLEDMYEPFLILKGLVQRTARGRVATPLAYEHLNRNPKDRWGEE.

Residues 1 to 179 form a large ATPase domain (RuvB-L) region; it reads MTHKISVLHQ…FAFTGRVDYY (179 aa). ATP is bound by residues L18, R19, G60, K63, T64, S65, 126–128, R169, Y179, and R216; that span reads EDF. T64 contacts Mg(2+). The interval 180-250 is small ATPAse domain (RuvB-S); that stretch reads TDEDLVSILS…VAEKALAMLL (71 aa). The interval 253 to 334 is head domain (RuvB-H); it reads NLGLNEIDIK…RNPKDRWGEE (82 aa). Positions 308 and 313 each coordinate DNA.

This sequence belongs to the RuvB family. As to quaternary structure, homohexamer. Forms an RuvA(8)-RuvB(12)-Holliday junction (HJ) complex. HJ DNA is sandwiched between 2 RuvA tetramers; dsDNA enters through RuvA and exits via RuvB. An RuvB hexamer assembles on each DNA strand where it exits the tetramer. Each RuvB hexamer is contacted by two RuvA subunits (via domain III) on 2 adjacent RuvB subunits; this complex drives branch migration. In the full resolvosome a probable DNA-RuvA(4)-RuvB(12)-RuvC(2) complex forms which resolves the HJ.

The protein localises to the cytoplasm. The enzyme catalyses ATP + H2O = ADP + phosphate + H(+). Its function is as follows. The RuvA-RuvB-RuvC complex processes Holliday junction (HJ) DNA during genetic recombination and DNA repair, while the RuvA-RuvB complex plays an important role in the rescue of blocked DNA replication forks via replication fork reversal (RFR). RuvA specifically binds to HJ cruciform DNA, conferring on it an open structure. The RuvB hexamer acts as an ATP-dependent pump, pulling dsDNA into and through the RuvAB complex. RuvB forms 2 homohexamers on either side of HJ DNA bound by 1 or 2 RuvA tetramers; 4 subunits per hexamer contact DNA at a time. Coordinated motions by a converter formed by DNA-disengaged RuvB subunits stimulates ATP hydrolysis and nucleotide exchange. Immobilization of the converter enables RuvB to convert the ATP-contained energy into a lever motion, pulling 2 nucleotides of DNA out of the RuvA tetramer per ATP hydrolyzed, thus driving DNA branch migration. The RuvB motors rotate together with the DNA substrate, which together with the progressing nucleotide cycle form the mechanistic basis for DNA recombination by continuous HJ branch migration. Branch migration allows RuvC to scan DNA until it finds its consensus sequence, where it cleaves and resolves cruciform DNA. This is Holliday junction branch migration complex subunit RuvB from Chlamydia trachomatis serovar A (strain ATCC VR-571B / DSM 19440 / HAR-13).